A 55-amino-acid chain; its full sequence is ATP synthase small subunit 6, mitochondrial (55 aa).

Residues 1–15 constitute a mitochondrion transit peptide; the sequence is MRQFDPWPVFFRREW. A helical membrane pass occupies residues 20-39; that stretch reads PFLVGFAVTGAIITKMSLGF.

Belongs to the ATPase 6 subunit family.

The protein localises to the mitochondrion inner membrane. Its function is as follows. Mitochondrial membrane ATP synthase (F(1)F(0) ATP synthase or Complex V) produces ATP from ADP in the presence of a proton gradient across the membrane which is generated by electron transport complexes of the respiratory chain. F-type ATPases consist of two structural domains, F(1) - containing the extramembraneous catalytic core and F(0) - containing the membrane proton channel, linked together by a central stalk and a peripheral stalk. During catalysis, ATP synthesis in the catalytic domain of F(1) is coupled via a rotary mechanism of the central stalk subunits to proton translocation. Part of the complex F(0) domain. Confers tolerance to several abiotic stresses (e.g. salt, mannitol, drought, oxidative and cold stresses), probably by providing additional energy needed for cell homeostasis. This is ATP synthase small subunit 6, mitochondrial from Solanum tuberosum (Potato).